The primary structure comprises 949 residues: Glycine dehydrogenase (decarboxylating) (949 aa).

The residue at position 704 (Lys-704) is an N6-(pyridoxal phosphate)lysine.

The protein belongs to the GcvP family. The glycine cleavage system is composed of four proteins: P, T, L and H. The cofactor is pyridoxal 5'-phosphate.

It catalyses the reaction N(6)-[(R)-lipoyl]-L-lysyl-[glycine-cleavage complex H protein] + glycine + H(+) = N(6)-[(R)-S(8)-aminomethyldihydrolipoyl]-L-lysyl-[glycine-cleavage complex H protein] + CO2. Its function is as follows. The glycine cleavage system catalyzes the degradation of glycine. The P protein binds the alpha-amino group of glycine through its pyridoxal phosphate cofactor; CO(2) is released and the remaining methylamine moiety is then transferred to the lipoamide cofactor of the H protein. In Bacteroides fragilis (strain YCH46), this protein is Glycine dehydrogenase (decarboxylating).